The sequence spans 238 residues: Proenkephalin-A (238 aa).

An N-terminal signal peptide occupies residues 1 to 25 (MAASALSTCLWMLVLGTCVSLVVGT). Cystine bridges form between Cys-27–Cys-50, Cys-31–Cys-54, and Cys-34–Cys-66. A disordered region spans residues 76-103 (QSPLASQQDQERVDAMMADEEDATSPEH). Propeptides lie at residues 124 to 167 (SSAS…AEAV), 177 to 195 (ADRG…GRVL), and 206 to 230 (VGRP…SELQ).

This sequence belongs to the opioid neuropeptide precursor family. Expressed by the venom gland. Moderately expressed in the venom gland transcriptome.

It is found in the secreted. Its function is as follows. Met-enkephalins compete with and mimic the effects of opiate drugs. They play a role in a number of physiologic functions, including pain perception and responses to stress. Enkephalin peptides found in Meiacanthus fangblennies induce physiological effects via their interaction with delta-type opioid receptors (OPRD1) (tested on M.grammistes). Therefore, finding a proenkephalin sequence in M.atrodorsalis venom suggests that this protein act in the same manner. In Meiacanthus atrodorsalis (Forktail blenny), this protein is Proenkephalin-A.